The following is a 214-amino-acid chain: Adenylate kinase (214 aa).

12 to 17 is an ATP binding site; it reads GVGKGT. The interval 32 to 61 is NMP; that stretch reads STGNIFRSQIASNSELGIKLKEIVESGGYV. Residues Thr-33, Arg-38, 59–61, 88–91, and Gln-95 contribute to the AMP site; these read GYV and GYPR. The LID stretch occupies residues 126–163; the sequence is GRRICPSCNAQYHIYFKKSKLDTKCEIDQSELIQRKDD. Arg-127 is an ATP binding site. Positions 130, 133, 150, and 153 each coordinate Zn(2+). Arg-160 and Arg-171 together coordinate AMP. Residue Lys-199 coordinates ATP.

It belongs to the adenylate kinase family. As to quaternary structure, monomer.

It is found in the cytoplasm. The catalysed reaction is AMP + ATP = 2 ADP. The protein operates within purine metabolism; AMP biosynthesis via salvage pathway; AMP from ADP: step 1/1. Its function is as follows. Catalyzes the reversible transfer of the terminal phosphate group between ATP and AMP. Plays an important role in cellular energy homeostasis and in adenine nucleotide metabolism. This Mycoplasmopsis pulmonis (strain UAB CTIP) (Mycoplasma pulmonis) protein is Adenylate kinase.